The sequence spans 330 residues: Calponin-3 (330 aa).

An N6-acetyllysine modification is found at lysine 23. Positions 26–130 constitute a Calponin-homology (CH) domain; that stretch reads QQAEEDLRNW…TLVALAGLAK (105 aa). At lysine 158 the chain carries N6-methyllysine. 3 Calponin-like repeats span residues 164 to 189, 204 to 229, and 243 to 268; these read IGLQ…RHLY, ISLQ…RDIY, and ISLQ…RQVY. A disordered region spans residues 279–330; sequence PVIHNGSQGTGTNGSEISDSDYQAEYPDEYHGEYPDEYPREYQYGDDQGIDY. Residues 306–318 show a composition bias toward basic and acidic residues; that stretch reads DEYHGEYPDEYPR.

It belongs to the calponin family.

Its function is as follows. Thin filament-associated protein that is implicated in the regulation and modulation of smooth muscle contraction. It is capable of binding to actin, calmodulin and tropomyosin. The interaction of calponin with actin inhibits the actomyosin Mg-ATPase activity. This is Calponin-3 (Cnn3) from Rattus norvegicus (Rat).